We begin with the raw amino-acid sequence, 201 residues long: Imidazole glycerol phosphate synthase subunit HisH (201 aa).

The 201-residue stretch at 1–201 (MVFIADYGAG…LKVLANFAEL (201 aa)) folds into the Glutamine amidotransferase type-1 domain. C79 acts as the Nucleophile in catalysis. Active-site residues include H183 and E185.

Heterodimer of HisH and HisF.

It localises to the cytoplasm. It catalyses the reaction 5-[(5-phospho-1-deoxy-D-ribulos-1-ylimino)methylamino]-1-(5-phospho-beta-D-ribosyl)imidazole-4-carboxamide + L-glutamine = D-erythro-1-(imidazol-4-yl)glycerol 3-phosphate + 5-amino-1-(5-phospho-beta-D-ribosyl)imidazole-4-carboxamide + L-glutamate + H(+). It carries out the reaction L-glutamine + H2O = L-glutamate + NH4(+). The protein operates within amino-acid biosynthesis; L-histidine biosynthesis; L-histidine from 5-phospho-alpha-D-ribose 1-diphosphate: step 5/9. In terms of biological role, IGPS catalyzes the conversion of PRFAR and glutamine to IGP, AICAR and glutamate. The HisH subunit catalyzes the hydrolysis of glutamine to glutamate and ammonia as part of the synthesis of IGP and AICAR. The resulting ammonia molecule is channeled to the active site of HisF. The sequence is that of Imidazole glycerol phosphate synthase subunit HisH from Chlorobium chlorochromatii (strain CaD3).